A 631-amino-acid polypeptide reads, in one-letter code: Transmembrane and coiled-coil domain-containing protein 4 (631 aa).

Residues 1 to 26 form a disordered region; sequence MATWNRPHPRLPVAPEPVAEGESQQP. Positions 153–183 form a coiled coil; sequence EEVFLESLKDAKEEESETAEESRKRKEKRRK. 4 helical membrane passes run 187–203, 204–220, 228–248, and 343–363; these read YLLI…VIGV, TGGL…ATII, LGSV…GAGL, and LSGI…ANVI. Residues 523–631 are disordered; that stretch reads WSEKGLPLAP…ETQESCAELD (109 aa). A compositionally biased stretch (polar residues) spans 571 to 590; it reads IPSSASQAQVPAGLDQSTED.

Belongs to the TMCO4 family.

It localises to the membrane. The chain is Transmembrane and coiled-coil domain-containing protein 4 (Tmco4) from Rattus norvegicus (Rat).